Here is a 436-residue protein sequence, read N- to C-terminus: 3-ketoacyl-CoA thiolase (436 aa).

Cys-99 functions as the Acyl-thioester intermediate in the catalytic mechanism. Catalysis depends on proton acceptor residues His-392 and Cys-422.

This sequence belongs to the thiolase-like superfamily. Thiolase family. In terms of assembly, heterotetramer of two alpha chains (FadJ) and two beta chains (FadI).

It is found in the cytoplasm. It carries out the reaction an acyl-CoA + acetyl-CoA = a 3-oxoacyl-CoA + CoA. Its pathway is lipid metabolism; fatty acid beta-oxidation. Its function is as follows. Catalyzes the final step of fatty acid oxidation in which acetyl-CoA is released and the CoA ester of a fatty acid two carbons shorter is formed. This chain is 3-ketoacyl-CoA thiolase, found in Shewanella frigidimarina (strain NCIMB 400).